A 529-amino-acid chain; its full sequence is E3 ubiquitin-protein ligase arih1 (529 aa).

2 disordered regions span residues 1–29 (MDSD…HEDE) and 46–69 (ERAG…EEDE). Positions 51-64 (CGEGGGSALGPGPG) are enriched in gly residues. Residues 77–125 (TAEQILQHMVECIREVNEVIQNPATITRILLSHFNWDKEKLMERYFDGN) are UBA-like. A TRIAD supradomain region spans residues 154–365 (LDMPCQICYL…SAWYNCNRYN (212 aa)). Residues Cys158, Cys161, Cys175, His177, Cys180, Cys183, Cys203, Cys208, Cys248, Cys253, Cys269, Cys271, Cys276, Cys279, His284, Cys289, Cys316, and Cys319 each coordinate Zn(2+). An RING-type 1 zinc finger spans residues 158-208 (CQICYLNYPNSYFTGLECGHKFCMQCWGEYLTTKIIEEGMGQTISCPAHGC). The IBR-type zinc finger occupies 228-289 (LKYQHLITNS…GENWHDPVKC (62 aa)). An RING-type 2; atypical zinc finger spans residues 316 to 347 (CPKCHVTIEKDGGCNHMVCRNQNCKAEFCWVC). The active site involves Cys329. Zn(2+) is bound by residues Cys334, Cys339, Cys344, Cys347, His354, and Cys361. Positions 380–529 (RAALQRYLFY…EKDLWEYIED (150 aa)) are ariadne domain.

This sequence belongs to the RBR family. Ariadne subfamily. As to quaternary structure, interacts (via the first RING-type zinc finger) with ube2l3. Associates with cullin-RING ubiquitin ligase (CRL) complexes containing neddylated cullin.

The protein localises to the cytoplasm. It is found in the nucleus. It carries out the reaction [E2 ubiquitin-conjugating enzyme]-S-ubiquitinyl-L-cysteine + [acceptor protein]-L-lysine = [E2 ubiquitin-conjugating enzyme]-L-cysteine + [acceptor protein]-N(6)-ubiquitinyl-L-lysine.. It functions in the pathway protein modification; protein ubiquitination. Its activity is regulated as follows. Autoinhibited by the ariadne domain, which masks the second RING-type zinc finger that contains the active site and inhibits the E3 activity. Inhibition is relieved upon binding to neddylated cullin-RING ubiquitin ligase complexes, which activate the E3 ligase activity of ARIH1. In terms of biological role, E3 ubiquitin-protein ligase, which catalyzes ubiquitination of target proteins together with ubiquitin-conjugating enzyme E2 ube2l3. Acts as an atypical E3 ubiquitin-protein ligase by working together with cullin-RING ubiquitin ligase (CRL) complexes and initiating ubiquitination of CRL substrates: associates with CRL complexes and specifically mediates addition of the first ubiquitin on CRLs targets. The initial ubiquitin is then elongated. E3 ubiquitin-protein ligase activity is activated upon binding to neddylated cullin-RING ubiquitin ligase complexes. The protein is E3 ubiquitin-protein ligase arih1 (arih1) of Xenopus laevis (African clawed frog).